A 215-amino-acid polypeptide reads, in one-letter code: Probable transaldolase (215 aa).

The active-site Schiff-base intermediate with substrate is the lysine 83.

This sequence belongs to the transaldolase family. Type 3B subfamily.

The protein localises to the cytoplasm. The enzyme catalyses D-sedoheptulose 7-phosphate + D-glyceraldehyde 3-phosphate = D-erythrose 4-phosphate + beta-D-fructose 6-phosphate. Its pathway is carbohydrate degradation; pentose phosphate pathway; D-glyceraldehyde 3-phosphate and beta-D-fructose 6-phosphate from D-ribose 5-phosphate and D-xylulose 5-phosphate (non-oxidative stage): step 2/3. Functionally, transaldolase is important for the balance of metabolites in the pentose-phosphate pathway. The protein is Probable transaldolase of Clostridium perfringens (strain SM101 / Type A).